Consider the following 763-residue polypeptide: Translation initiation factor IF-2 (763 aa).

Positions 52 to 178 are disordered; sequence KQKKVQTSQN…KDEAIKHETK (127 aa). Residues 65–82 show a composition bias toward basic and acidic residues; the sequence is SNDENKKITNKNTEKTTE. Residues 86–96 are compositionally biased toward polar residues; that stretch reads TVDSNKQNNSN. Basic and acidic residues-rich tracts occupy residues 105 to 116 and 123 to 135; these read RNNDEESVSHFD and KSEMNEKRDLNDK. Positions 136-145 are enriched in basic residues; sequence KKNKNFKNTK. The span at 146–161 shows a compositional bias: low complexity; sequence NKNSNNNKNSKNNKNN. Residues 162–178 show a composition bias toward basic and acidic residues; the sequence is KNNDHNRKDEAIKHETK. Residues 265–434 enclose the tr-type G domain; that stretch reads ERPPVITVMG…LMVAEMEELK (170 aa). Positions 274 to 281 are G1; it reads GHVDHGKT. A GTP-binding site is contributed by 274-281; that stretch reads GHVDHGKT. The segment at 299 to 303 is G2; sequence GITQH. A G3 region spans residues 320–323; sequence DTPG. GTP contacts are provided by residues 320–324 and 374–377; these read DTPGH and NKID. A G4 region spans residues 374–377; the sequence is NKID. The interval 410–412 is G5; it reads SAR.

The protein belongs to the TRAFAC class translation factor GTPase superfamily. Classic translation factor GTPase family. IF-2 subfamily.

The protein localises to the cytoplasm. In terms of biological role, one of the essential components for the initiation of protein synthesis. Protects formylmethionyl-tRNA from spontaneous hydrolysis and promotes its binding to the 30S ribosomal subunits. Also involved in the hydrolysis of GTP during the formation of the 70S ribosomal complex. This is Translation initiation factor IF-2 from Finegoldia magna (strain ATCC 29328 / DSM 20472 / WAL 2508) (Peptostreptococcus magnus).